We begin with the raw amino-acid sequence, 307 residues long: Transcription factor DIVARICATA (307 aa).

The region spanning 21–74 is the SANT domain; the sequence is RSTTRWTAAENKAFENALAVFDENTPNRWERVAERVPGKTVGDVMRQYKELEDD. Residues 109–133 are disordered; it reads QSYGTGGRKSSSGRPSEQERKKGVP. Residues 124 to 133 are compositionally biased toward basic and acidic residues; the sequence is SEQERKKGVP. The 57-residue stretch at 126-182 folds into the HTH myb-type domain; sequence QERKKGVPWTEEEHKLFLMGLKKYGKGDWRNISRNFVITRTPTQVASHAQKYFIRQL. A DNA-binding region (H-T-H motif) is located at residues 154-178; that stretch reads WRNISRNFVITRTPTQVASHAQKYF. Composition is skewed to polar residues over residues 196 to 206 and 222 to 231; these read ITTVNLSDNQT and MAQQQTSSTS. Residues 196 to 231 are disordered; the sequence is ITTVNLSDNQTPSPDNKKPPSSPDHSMAQQQTSSTS.

Its subcellular location is the nucleus. Involved in the dorsovental asymmetry of flowers. Promotes ventral identity. The protein is Transcription factor DIVARICATA (DIVARICATA) of Antirrhinum majus (Garden snapdragon).